The primary structure comprises 255 residues: MFKLNFKNNYKVLTLLFSLTLSMFVSNAQVYYPGYLNNVSSISTVSADYFPLLVHNPPLTNSTTYSFNEAINLLDTVTDPIFNATQIQALLNTWASNVKAVIGLSLPIYVTQLNRINRIDLLSIQMYTETNSAFILSATTYAPLKPQGVSILNQVNAIKASLNGITLTTTQQAQLTQFNAAISKIQLSVSNSHLITFGANDVIPFNSDSLSYMEYIADDILTLDDAIDIIKQNNVRILNYIYDLYSTHKTLSLNF.

The N-terminal stretch at 1-28 (MFKLNFKNNYKVLTLLFSLTLSMFVSNA) is a signal peptide. N-linked (GlcNAc...) asparagine glycosylation is found at N38, N61, and N83.

The protein localises to the secreted. This is an uncharacterized protein from Dictyostelium discoideum (Social amoeba).